A 280-amino-acid polypeptide reads, in one-letter code: Shikimate dehydrogenase (NADP(+)) (280 aa).

Shikimate-binding positions include 19 to 21 (SFS) and Thr-66. Catalysis depends on Lys-70, which acts as the Proton acceptor. Residue Glu-82 coordinates NADP(+). Asn-91 and Asp-106 together coordinate shikimate. Residues 130–134 (GSGGA) and Leu-222 each bind NADP(+). Tyr-224 lines the shikimate pocket. Gly-245 contacts NADP(+).

It belongs to the shikimate dehydrogenase family. In terms of assembly, homodimer.

It catalyses the reaction shikimate + NADP(+) = 3-dehydroshikimate + NADPH + H(+). It participates in metabolic intermediate biosynthesis; chorismate biosynthesis; chorismate from D-erythrose 4-phosphate and phosphoenolpyruvate: step 4/7. In terms of biological role, involved in the biosynthesis of the chorismate, which leads to the biosynthesis of aromatic amino acids. Catalyzes the reversible NADPH linked reduction of 3-dehydroshikimate (DHSA) to yield shikimate (SA). This is Shikimate dehydrogenase (NADP(+)) from Methanococcus maripaludis (strain C7 / ATCC BAA-1331).